The following is a 232-amino-acid chain: Peroxiredoxin (232 aa).

Positions 6–161 (PSIGEKFPEI…ILRLIESLQI (156 aa)) constitute a Thioredoxin domain. Cysteine 48 functions as the Cysteine sulfenic acid (-SOH) intermediate in the catalytic mechanism. Arginine 124 provides a ligand contact to substrate. Cysteines 203 and 209 form a disulfide.

The protein belongs to the peroxiredoxin family. Prx6 subfamily. In terms of assembly, homodecamer. Pentamer of dimers that assemble into a ring structure.

The protein resides in the cytoplasm. It carries out the reaction a hydroperoxide + [thioredoxin]-dithiol = an alcohol + [thioredoxin]-disulfide + H2O. Its function is as follows. Thiol-specific peroxidase that catalyzes the reduction of hydrogen peroxide and organic hydroperoxides to water and alcohols, respectively. Plays a role in cell protection against oxidative stress by detoxifying peroxides. In Hyperthermus butylicus (strain DSM 5456 / JCM 9403 / PLM1-5), this protein is Peroxiredoxin.